We begin with the raw amino-acid sequence, 356 residues long: MTSVTRSEIIDEKGPVMSKTHDHQLESSLSPVEVFAKTSASLEMNQGVSEERIHLGSSPKKGGNCDLSHQERLQSKSLHLSPQEQSASYQDRRQSWRRASMKETNRRKSLHPIHQGITELSRSISVDLAESKRLGCLLLSSFQFSIQKLEPFLRDTKGFSLESFRAKASSLSEELKHFADGLETDGTLQKCFEDSNGKASDFSLEASVAEMKEYITKFSLERQTWDQLLLHYQQEAKEILSRGSTEAKITEVKVEPMTYLGSSQNEVLNTKPDYQKILQNQSKVFDCMELVMDELQGSVKQLQAFMDESTQCFQKVSVQLGKRSMQQLDPSPARKLLKLQLQNPPAIHGSGSGSCQ.

Residues 1–28 (MTSVTRSEIIDEKGPVMSKTHDHQLESS) are disordered. Positions 8-25 (EIIDEKGPVMSKTHDHQL) are enriched in basic and acidic residues. Residues serine 28, serine 30, serine 58, serine 77, serine 81, serine 109, and serine 125 each carry the phosphoserine modification. The disordered stretch occupies residues 73 to 93 (LQSKSLHLSPQEQSASYQDRR). A compositionally biased stretch (polar residues) spans 75 to 89 (SKSLHLSPQEQSASY). Lysine 253 participates in a covalent cross-link: Glycyl lysine isopeptide (Lys-Gly) (interchain with G-Cter in SUMO2). Serine 331 carries the phosphoserine modification.

In terms of assembly, component of the MIS12 complex composed of MIS12, DSN1, NSL1 and PMF1. Also interacts with KNL1, CBX3 and CBX5. Interacts with KNSTRN.

It localises to the nucleus. Its subcellular location is the chromosome. The protein resides in the centromere. It is found in the kinetochore. Part of the MIS12 complex which is required for normal chromosome alignment and segregation and kinetochore formation during mitosis. The sequence is that of Kinetochore-associated protein DSN1 homolog (DSN1) from Homo sapiens (Human).